Consider the following 522-residue polypeptide: MEDIEKLLLQEKILMLELDLVRAKISLARAKGSMQQGGNSLHRETPVKEEAVHSALATFAPIQAKAIPEQTAPGKESTNPLMVSILPKDMKSVQTEKKRLVTPMDFLRPNQGIQIPQKSEPNSSVAPNRAESGIQHPHSNYYVVYNGPHAGIYDDWGSAKAATNGVPGVAHKKFATITEARAAADVYTTAQQAERLNFIPKGEAQLKPKSFVKALTSPPKQKAQWLTLGVKKPSSDPAPKEVSFDQETTMDDFLYLYDLGRRFDGEGDDTVFTTDNESISLFNFRKNANPEMIREAYNAGLIRTIYPSNNLQEIKYLPKKVKDAVKKFRTNCIKNTEKDIFLKIKSTIPVWQDQGLLHKPKHVIEIGVSKKIVPKESKAMESKDHSEDLIELATKTGEQFIQSLLRLNDKKKIFVNLVEHDTLVYSKNTKETVSEDQRAIETFQQRVITPNLLGFHCPSICHFIKRTVEKEGGAYKCHHCDKGKAIVQDASADSKVADKEGPPLTTNVEKEDVSTTSSKASG.

The span at 111–126 (QGIQIPQKSEPNSSVA) shows a compositional bias: polar residues. Disordered regions lie at residues 111–133 (QGIQIPQKSEPNSSVAPNRAESG) and 491–522 (SADSKVADKEGPPLTTNVEKEDVSTTSSKASG).

It belongs to the caulimoviridae viroplasmin family.

It is found in the host cytoplasm. Functionally, enhances the ribosomal termination-reinitiation event leading to the translation of major open reading frames on the polycistronic viral RNAs. This Arabidopsis thaliana (Mouse-ear cress) protein is Transactivator/viroplasmin protein.